We begin with the raw amino-acid sequence, 634 residues long: MRPATELAVRIGRELLKVSGSSRAARIWSPLIEQSLHGLGFRHSISPSLVARVIDPFLLNHHSLALGFFNWAAQQPGYSHDSISYHSIFKSLSLSRQFSAMDALFKQVKSNKILLDSSVYRSLIDTLVLGRKAQSAFWVLEEAFSTGQEIHPDVCNRLLAGLTSDGCYDYAQKLFVKMRHKGVSLNTLGFGVYIGWFCRSSETNQLLRLVDEVKKANLNINGSIIALLILHSLCKCSREMDAFYILEELRNIDCKPDFMAYRVIAEAFVVTGNLYERQVVLKKKRKLGVAPRSSDYRAFILDLISAKRLTEAKEVAEVIVSGKFPMDNDILDALIGSVSAVDPDSAVEFLVYMVSTGKLPAIRTLSKLSKNLCRHDKSDHLIKAYELLSSKGYFSELQSYSLMISFLCKAGRVRESYTALQEMKKEGLAPDVSLYNALIEACCKAEMIRPAKKLWDEMFVEGCKMNLTTYNVLIRKLSEEGEAEESLRLFDKMLERGIEPDETIYMSLIEGLCKETKIEAAMEVFRKCMERDHKTVTRRVLSEFVLNLCSNGHSGEASQLLREREHLEHTGAHVVLLKCVADAKEVEIGIRHMQWIKEVSPSLVHTISSDLLASFCSSSDPDSILPFIRAIENT.

PPR repeat units follow at residues 81–115 (DSISYHSIFKSLSLSRQFSAMDALFKQVKSNKILL), 116–150 (DSSVYRSLIDTLVLGRKAQSAFWVLEEAFSTGQEI), 151–185 (HPDVCNRLLAGLTSDGCYDYAQKLFVKMRHKGVSL), 186–220 (NTLGFGVYIGWFCRSSETNQLLRLVDEVKKANLNI), 222–256 (GSIIALLILHSLCKCSREMDAFYILEELRNIDCKP), 257–291 (DFMAYRVIAEAFVVTGNLYERQVVLKKKRKLGVAP), 292–326 (RSSDYRAFILDLISAKRLTEAKEVAEVIVSGKFPM), 327–360 (DNDILDALIGSVSAVDPDSAVEFLVYMVSTGKLP), 361–395 (AIRTLSKLSKNLCRHDKSDHLIKAYELLSSKGYFS), 396–430 (ELQSYSLMISFLCKAGRVRESYTALQEMKKEGLAP), 431–465 (DVSLYNALIEACCKAEMIRPAKKLWDEMFVEGCKM), 466–500 (NLTTYNVLIRKLSEEGEAEESLRLFDKMLERGIEP), and 501–535 (DETIYMSLIEGLCKETKIEAAMEVFRKCMERDHKT).

This sequence belongs to the PPR family. P subfamily.

This chain is Pentatricopeptide repeat-containing protein At5g14080, found in Arabidopsis thaliana (Mouse-ear cress).